We begin with the raw amino-acid sequence, 345 residues long: NADPH dehydrogenase (345 aa).

23-26 lines the FMN pocket; sequence SPMC. Position 28 (Tyr28) interacts with substrate. Ala60 and Gln102 together coordinate FMN. Residue 164–167 coordinates substrate; it reads HGAH. FMN-binding positions include Arg215 and 307-308; that span reads GR.

The protein belongs to the NADH:flavin oxidoreductase/NADH oxidase family. NamA subfamily. Homotetramer. FMN is required as a cofactor.

The enzyme catalyses A + NADPH + H(+) = AH2 + NADP(+). In terms of biological role, catalyzes the reduction of the double bond of an array of alpha,beta-unsaturated aldehydes and ketones. It also reduces the nitro group of nitroester and nitroaromatic compounds. It could have a role in detoxification processes. The sequence is that of NADPH dehydrogenase from Bacillus cereus (strain ZK / E33L).